The sequence spans 294 residues: uncharacterized protein (294 aa).

This is an uncharacterized protein from Diadromus pulchellus idnoreovirus 1 (DpIRV-1).